A 175-amino-acid chain; its full sequence is COMPASS component SDC1 (175 aa).

Over residues 1–12 the composition is skewed to polar residues; the sequence is MNESENSPQHNE. Residues 1 to 45 are disordered; that stretch reads MNESENSPQHNEVTVPMVEDTSSNADIPMEQIQREDNKNYDKHDN. Basic and acidic residues predominate over residues 32-45; the sequence is IQREDNKNYDKHDN. Residues 121-162 form a DPY-30 region; it reads QTRKYLNTNVTPHLLAGMRLIAVQQPEDPLRVLGEYLIEQSN.

It belongs to the dpy-30 family. As to quaternary structure, component of the Set1C/COMPASS complex which consists of SET1(2), BRE2(2), SPP1(2), SDC1(1), SHG1(1), SWD1(1), SWD2(1), and SWD3(1). Interacts directly with BRE2.

The protein resides in the nucleus. In terms of biological role, component of the Set1C/COMPASS complex that specifically mono-, di- and trimethylates histone H3 to form H3K4me1/2/3, which subsequently plays a role in telomere length maintenance and transcription elongation regulation. COMPASS recognizes ubiquitinated H2B on one face of the nucleosome which stimulates the methylation of H3 on the opposing face. This is COMPASS component SDC1 from Saccharomyces cerevisiae (strain ATCC 204508 / S288c) (Baker's yeast).